The chain runs to 311 residues: 4-hydroxy-3-methylbut-2-enyl diphosphate reductase (311 aa).

[4Fe-4S] cluster is bound at residue Cys-12. Positions 41 and 74 each coordinate (2E)-4-hydroxy-3-methylbut-2-enyl diphosphate. Positions 41 and 74 each coordinate dimethylallyl diphosphate. Isopentenyl diphosphate-binding residues include His-41 and His-74. Cys-96 is a [4Fe-4S] cluster binding site. Residue His-124 participates in (2E)-4-hydroxy-3-methylbut-2-enyl diphosphate binding. His-124 is a binding site for dimethylallyl diphosphate. His-124 contributes to the isopentenyl diphosphate binding site. The active-site Proton donor is the Glu-126. Thr-167 serves as a coordination point for (2E)-4-hydroxy-3-methylbut-2-enyl diphosphate. Cys-197 contacts [4Fe-4S] cluster. Ser-225, Ser-226, Asn-227, and Ser-269 together coordinate (2E)-4-hydroxy-3-methylbut-2-enyl diphosphate. Dimethylallyl diphosphate-binding residues include Ser-225, Ser-226, Asn-227, and Ser-269. 4 residues coordinate isopentenyl diphosphate: Ser-225, Ser-226, Asn-227, and Ser-269.

Belongs to the IspH family. [4Fe-4S] cluster is required as a cofactor.

It carries out the reaction isopentenyl diphosphate + 2 oxidized [2Fe-2S]-[ferredoxin] + H2O = (2E)-4-hydroxy-3-methylbut-2-enyl diphosphate + 2 reduced [2Fe-2S]-[ferredoxin] + 2 H(+). The enzyme catalyses dimethylallyl diphosphate + 2 oxidized [2Fe-2S]-[ferredoxin] + H2O = (2E)-4-hydroxy-3-methylbut-2-enyl diphosphate + 2 reduced [2Fe-2S]-[ferredoxin] + 2 H(+). It functions in the pathway isoprenoid biosynthesis; dimethylallyl diphosphate biosynthesis; dimethylallyl diphosphate from (2E)-4-hydroxy-3-methylbutenyl diphosphate: step 1/1. The protein operates within isoprenoid biosynthesis; isopentenyl diphosphate biosynthesis via DXP pathway; isopentenyl diphosphate from 1-deoxy-D-xylulose 5-phosphate: step 6/6. In terms of biological role, catalyzes the conversion of 1-hydroxy-2-methyl-2-(E)-butenyl 4-diphosphate (HMBPP) into a mixture of isopentenyl diphosphate (IPP) and dimethylallyl diphosphate (DMAPP). Acts in the terminal step of the DOXP/MEP pathway for isoprenoid precursor biosynthesis. The chain is 4-hydroxy-3-methylbut-2-enyl diphosphate reductase from Aeromonas salmonicida (strain A449).